The following is a 211-amino-acid chain: V-type ATP synthase subunit D (211 aa).

Belongs to the V-ATPase D subunit family.

Functionally, produces ATP from ADP in the presence of a proton gradient across the membrane. In Enterococcus faecalis (strain ATCC 700802 / V583), this protein is V-type ATP synthase subunit D.